The following is a 59-amino-acid chain: Large ribosomal subunit protein bL32c (59 aa).

The tract at residues 36–59 (KSRSFSGVSEHPKPKGFSRQQTNK) is disordered.

The protein belongs to the bacterial ribosomal protein bL32 family.

It is found in the plastid. It localises to the chloroplast. The sequence is that of Large ribosomal subunit protein bL32c from Oryza nivara (Indian wild rice).